Reading from the N-terminus, the 25-residue chain is Small ribosomal subunit protein eS32 (25 aa).

Residues 1–25 (MRAKWRKKRMRRLKRKRRKMRQRSK) are disordered.

It belongs to the eukaryotic ribosomal protein eS32 family. As to quaternary structure, component of the large ribosomal subunit.

It localises to the cytoplasm. Functionally, component of the small ribosomal subunit. The ribosome is a large ribonucleoprotein complex responsible for the synthesis of proteins in the cell. This is Small ribosomal subunit protein eS32 (rpl41) from Cyprinus carpio (Common carp).